The chain runs to 454 residues: Transcription factor efuD (454 aa).

Residues 4 to 111 (AKELIRITAR…NYHRAIDSIK (108 aa)) enclose the HTH TFE/IIEalpha-type domain. Residues 327–454 (LRTDDDGAMD…DEDELEFEDI (128 aa)) form a disordered region. Acidic residues predominate over residues 353–372 (DQDEEEEEEDDDDDEFEDVD). Residues 387 to 401 (SVSTPATSAQVSSTA) show a composition bias toward polar residues. Low complexity predominate over residues 423 to 437 (APAAAASSQAAAAES). Residues 442 to 454 (SDEDEDELEFEDI) are compositionally biased toward acidic residues.

The protein belongs to the TFIIE alpha subunit family.

It is found in the nucleus. Its function is as follows. Transcription factor; part of the gene cluster that mediates the biosynthesis of enfumafungin, a glycosylated fernene-type triterpenoid with potent antifungal activity, mediated by its interaction with beta-1,3-glucan synthase and the fungal cell wall. Is possibly responsible for the transcription regulation of one or more genes within the gene cluster. The polypeptide is Transcription factor efuD (Hormonema carpetanum).